A 376-amino-acid polypeptide reads, in one-letter code: Na(+)/H(+) antiporter NhaA (376 aa).

11 helical membrane-spanning segments follow: residues 8–28 (FLAT…AAML), 49–69 (LSLL…LVGL), 87–107 (ILPC…YLAF), 117–137 (GWAI…ALLG), 140–160 (APAS…MGAV), 162–182 (IIAL…AIVI), 209–229 (LAVL…ALAI), 248–268 (PWVA…VSFA), 270–290 (IGAE…LFLG), 321–341 (GVAL…GLAF), and 349–369 (EVKI…YALL).

This sequence belongs to the NhaA Na(+)/H(+) (TC 2.A.33) antiporter family.

It localises to the cell inner membrane. The enzyme catalyses Na(+)(in) + 2 H(+)(out) = Na(+)(out) + 2 H(+)(in). Na(+)/H(+) antiporter that extrudes sodium in exchange for external protons. This chain is Na(+)/H(+) antiporter NhaA, found in Rhizorhabdus wittichii (strain DSM 6014 / CCUG 31198 / JCM 15750 / NBRC 105917 / EY 4224 / RW1) (Sphingomonas wittichii).